A 933-amino-acid polypeptide reads, in one-letter code: MTLLGSEHSLLIRSKFRSVLQLRLQQRRTQEQLANEGIIPPLRSPPAFHEQRRRLESDKAADTLKHKVRNRSDRGNVVKMHILQASSAERPVPAAQMKLKRARLADDLNEKIALRPGPLELVEKNILPVDCAVKEAIKGNQVSLSKSADAFAFEEDSSSDGLSPDQTRSEDLPGSAGSPLDTKAAETPLAGPRGTVQDLTLGSENERNDSAPQSGNQSDLGKQGLGPLGSPLPVHAAVKSKSLSDGKNRHKKPKDPKPKVKKLKYHQYIPPDQKAEKSPPPMDSAYARLLQQQQLFLQLQILSQQQQHRFSYPGIHQAQLKEPNEQMARNPNSSSAPLSSTPLSPAKNSFSGQTGVSSLKPGPLPSNLDDLKVSELRQQLRIRGLPVSGTKTALMDRLRPFQDCSGNPVPNFGDITTVTFPVTPSNALPSYQSSPSTSAFYHFGSTSSSPPISPASSDLSVAGSLPDTFNDASPSFGLHPSPVHACAEESLMSSLNGGSLPPELDGLDSEKDKMLVEKQKVINELTWKLQQEQRQVEELRMQLQKQKRGTCPEKKPLPFLAAPIKQEDAGSSCPFAPLPRAVKRQSNSSEEQPAAGDAARLRPLGNTHCAESSGQTNVLSSTFLSPQCSPQHSPFGAVKSPQHISLPPSPNNPYFLPASSGAPGEEHRVSSPVSSQVCTAQMVGLHSSDKAGPKFSNPSPTFSKSASAVSEITQPPSYEDAVKQQMTRSQQMDELLDVLIESGEMPADAREDHSCLQKVPKIPGSSRSPTAALPKPSATFDQASSGGQLAFDHYSNDSDEHLEVLLNSQSPLGKVSEVALLKIGSEEPAFDGMADGFSGKAAEELFNAHEILPGPLSPMHTQFSPSSVDSSGLPLGFTESPWESMEWLDLTPPSSTQGFSSLSTGGPSIFNIDFLDVTDLNLNSPMDLHLQQW.

Positions 12–27 (IRSKFRSVLQLRLQQR) match the MEF2C-binding motif. RPEL repeat units lie at residues 18–43 (SVLQ…PPLR), 62–87 (DTLK…QASS), and 106–131 (DDLN…PVDC). Residues 153–205 (FEEDSSSDGLSPDQTRSEDLPGSAGSPLDTKAAETPLAGPRGTVQDLTLGSEN) are HDAC5-binding. Disordered stretches follow at residues 154 to 282 (EEDS…PPPM) and 324 to 365 (NEQM…GPLP). Residues 210 to 220 (SAPQSGNQSDL) show a composition bias toward polar residues. Over residues 248–265 (NRHKKPKDPKPKVKKLKY) the composition is skewed to basic residues. Low complexity predominate over residues 330-346 (NPNSSSAPLSSTPLSPA). Residues 347–357 (KNSFSGQTGVS) are compositionally biased toward polar residues. One can recognise an SAP domain in the interval 368 to 402 (LDDLKVSELRQQLRIRGLPVSGTKTALMDRLRPFQ). Phosphoserine; by GSK3-beta occurs at positions 445, 449, 453, and 457. A coiled-coil region spans residues 515 to 550 (LVEKQKVINELTWKLQQEQRQVEELRMQLQKQKRGT). The tract at residues 568-613 (DAGSSCPFAPLPRAVKRQSNSSEEQPAAGDAARLRPLGNTHCAESS) is disordered. Phosphoserine; by GSK3-beta is present on residues Ser-621, Ser-625, Ser-629, and Ser-633. Disordered stretches follow at residues 630–672 (PQHS…VSSP) and 760–794 (PKIP…FDHY). Residues 712–933 (ITQPPSYEDA…SPMDLHLQQW (222 aa)) are required for interaction with and ubiquitination by STUB1. Phosphoserine; by MAPK1 and MAPK3 is present on residues Ser-810, Ser-857, and Ser-864. Thr-891 carries the phosphothreonine; by MAPK1 and MAPK3 modification.

As to quaternary structure, homodimer. Interacts with MLLT7/FOXO4. Interacts with SRF, its association does not depend on specific DNA sequences for ternary complex formation. Interacts (via C-terminal) with EP300 (via the CREB-binding domain). Interacts with HDAC4 and HDAC5. Interacts with MEF2C. Interacts (via C-terminus) with STUB1/CHIP. Interacts with PURB. In terms of processing, ubiquitinated; by STUB1/CHIP at the C-terminus, leading to its degradation by the proteasome. Phosphorylation by GSK3B is required for STUB1/CHIP-mediated ubiquitination. Phosphorylation negatively regulates the intrinsic myocardin transcriptional activity. Phosphorylated; by GSK3B. In terms of tissue distribution, expressed in the heart and in smooth muscle cells-containing tissues (aorta, pulmonary vein, lung), but is not detectable in skeletal muscle, liver, kidney and spleen.

It is found in the nucleus. Smooth muscle cells (SM) and cardiac muscle cells-specific transcriptional factor which uses the canonical single or multiple CArG boxes DNA sequence. Acts as a cofactor of serum response factor (SRF) with the potential to modulate SRF-target genes. Plays a crucial role in cardiogenesis, urinary bladder development, and differentiation of the smooth muscle cell lineage (myogenesis). Positively regulates the transcription of genes involved in vascular smooth muscle contraction. The polypeptide is Myocardin (MYOCD) (Sus scrofa (Pig)).